Consider the following 346-residue polypeptide: MDSYDAPELTPRQDASSRLKDFFVGATPLQKRLESVRKQTSFIPTPPRRKIPQGSQLQEDVDPQKFAFLLHKQWTLYSLTPLYKFSYTNFKEYSKLLNAFIAAEKQKGLAVEVGDDFNIKVVFSTLMGVKGTQRDPEAFLVQILSKSQLPSEHKEGKVLWTGWFCCVFGDSLLETVSEDFTCLPLFLVNGAETNTAIIGTWFQKTFDCYFRPLAINAFNLSWMAAMWTACKMDHYMATTEFLWSVPCSPHSLDISYAIHPEDAKALWDSVHKTPGEVTQEEVDLFMDCLYSHFHRHFKIHLSATRLVRVSTSVASAHTDGKIKILCPKYLIGVLAYLTELAVFQIE.

A Phosphoserine modification is found at Ser41. Thr45 carries the phosphothreonine modification. Phosphoserine is present on Ser55.

This sequence belongs to the CENP-L/IML3 family. Component of the CENPA-CAD complex, composed of CENPI, CENPK, CENPL, CENPO, CENPP, CENPQ, CENPR and CENPS. The CENPA-CAD complex interacts with the CENPA-NAC complex, at least composed of CENPA, CENPC, CENPH, CENPM, CENPN, CENPT and CENPU.

Its subcellular location is the nucleus. The protein resides in the chromosome. The protein localises to the centromere. Component of the CENPA-CAD (nucleosome distal) complex, a complex recruited to centromeres which is involved in assembly of kinetochore proteins, mitotic progression and chromosome segregation. May be involved in incorporation of newly synthesized CENPA into centromeres via its interaction with the CENPA-NAC complex. This chain is Centromere protein L (CENPL), found in Bos taurus (Bovine).